Reading from the N-terminus, the 234-residue chain is Uridylate kinase (234 aa).

10–11 (GS) contacts ATP. Glycine 44 contributes to the UMP binding site. Residues glycine 45 and arginine 49 each contribute to the ATP site. Residues aspartate 66 and 114–120 (ITPGQTT) each bind UMP. ATP contacts are provided by threonine 140, tyrosine 146, and aspartate 149.

Belongs to the UMP kinase family. In terms of assembly, homohexamer.

It localises to the cytoplasm. The catalysed reaction is UMP + ATP = UDP + ADP. It functions in the pathway pyrimidine metabolism; CTP biosynthesis via de novo pathway; UDP from UMP (UMPK route): step 1/1. With respect to regulation, inhibited by UTP. Its function is as follows. Catalyzes the reversible phosphorylation of UMP to UDP. This is Uridylate kinase from Methanoregula boonei (strain DSM 21154 / JCM 14090 / 6A8).